Consider the following 172-residue polypeptide: ATP synthase subunit b (172 aa).

Residues 12-32 (VGFNAGTMLFQLVAMLILLAL) form a helical membrane-spanning segment.

The protein belongs to the ATPase B chain family. F-type ATPases have 2 components, F(1) - the catalytic core - and F(0) - the membrane proton channel. F(1) has five subunits: alpha(3), beta(3), gamma(1), delta(1), epsilon(1). F(0) has three main subunits: a(1), b(2) and c(10-14). The alpha and beta chains form an alternating ring which encloses part of the gamma chain. F(1) is attached to F(0) by a central stalk formed by the gamma and epsilon chains, while a peripheral stalk is formed by the delta and b chains.

The protein resides in the cell membrane. F(1)F(0) ATP synthase produces ATP from ADP in the presence of a proton or sodium gradient. F-type ATPases consist of two structural domains, F(1) containing the extramembraneous catalytic core and F(0) containing the membrane proton channel, linked together by a central stalk and a peripheral stalk. During catalysis, ATP synthesis in the catalytic domain of F(1) is coupled via a rotary mechanism of the central stalk subunits to proton translocation. In terms of biological role, component of the F(0) channel, it forms part of the peripheral stalk, linking F(1) to F(0). The sequence is that of ATP synthase subunit b from Bacillus licheniformis (strain ATCC 14580 / DSM 13 / JCM 2505 / CCUG 7422 / NBRC 12200 / NCIMB 9375 / NCTC 10341 / NRRL NRS-1264 / Gibson 46).